A 713-amino-acid polypeptide reads, in one-letter code: Metal transporter CNNM3 (713 aa).

Residues 7–29 (AVVGWLGWVLAAFCLGSTAGEAA) traverse the membrane as a helical segment. N73 carries an N-linked (GlcNAc...) asparagine glycan. The CNNM transmembrane domain maps to 136–314 (EAAPPWALGL…DPYSDLSKGV (179 aa)). 4 consecutive transmembrane segments (helical) span residues 137–157 (AAPP…AAVA), 199–219 (CALG…AVLL), 227–247 (AVPA…VLPA), and 267–287 (LAVL…ELAA). CBS domains are found at residues 324 to 385 (LTPL…CTPL) and 392 to 458 (YNHP…ILDE). Residues 664–713 (LPPSPENAELQAIPGSQTRLLGDKSRETAGSTNSRPSIPVEESPGRNPGV) are disordered. S667 and S706 each carry phosphoserine.

It belongs to the ACDP family. In terms of tissue distribution, widely expressed with highest levels in brain, kidney, liver, lung and heart.

It localises to the cell membrane. Functionally, probable metal transporter. This Mus musculus (Mouse) protein is Metal transporter CNNM3 (Cnnm3).